Consider the following 346-residue polypeptide: Sensor histidine kinase GraS (346 aa).

2 helical membrane passes run 15–35 and 43–63; these read MNWIFWILFLNLLMLGISLID and LFYIVSLNLSLTMIFLILTYF. Residues 126 to 332 enclose the Histidine kinase domain; the sequence is EFVHDIKTPV…TVRLIFPLQN (207 aa).

As to quaternary structure, interacts with GraX.

The protein localises to the cell membrane. It catalyses the reaction ATP + protein L-histidine = ADP + protein N-phospho-L-histidine.. In terms of biological role, member of the two-component regulatory system GraR/GraS involved in resistance against cationic antimicrobial peptides (CAMPs). Functions as a sensor protein kinase which phosphorylates GraR through the auxiliary protein GraX. In turn, GraR up-regulates many genes such as adhesins, exoproteins, transporters, toxins, and proteins involved in cell wall synthesis. Down-regulates the expression of many genes involved in RNA and amino acid synthesis or glycolysis. This chain is Sensor histidine kinase GraS (graS), found in Staphylococcus aureus (strain Mu50 / ATCC 700699).